A 56-amino-acid chain; its full sequence is Large ribosomal subunit protein bL32 (56 aa).

Over residues 1–19 the composition is skewed to basic residues; it reads MAVPKRKKSRSTTRHRRAQ. The disordered stretch occupies residues 1 to 22; sequence MAVPKRKKSRSTTRHRRAQWKT.

Belongs to the bacterial ribosomal protein bL32 family.

The polypeptide is Large ribosomal subunit protein bL32 (Cutibacterium acnes (strain DSM 16379 / KPA171202) (Propionibacterium acnes)).